A 365-amino-acid chain; its full sequence is Chorismate synthase (365 aa).

R48 and R54 together coordinate NADP(+). FMN is bound by residues 129-131 (RSS), 241-242 (NA), G285, 300-304 (KPTSS), and R326.

This sequence belongs to the chorismate synthase family. Homotetramer. It depends on FMNH2 as a cofactor.

The enzyme catalyses 5-O-(1-carboxyvinyl)-3-phosphoshikimate = chorismate + phosphate. The protein operates within metabolic intermediate biosynthesis; chorismate biosynthesis; chorismate from D-erythrose 4-phosphate and phosphoenolpyruvate: step 7/7. In terms of biological role, catalyzes the anti-1,4-elimination of the C-3 phosphate and the C-6 proR hydrogen from 5-enolpyruvylshikimate-3-phosphate (EPSP) to yield chorismate, which is the branch point compound that serves as the starting substrate for the three terminal pathways of aromatic amino acid biosynthesis. This reaction introduces a second double bond into the aromatic ring system. This is Chorismate synthase from Parvibaculum lavamentivorans (strain DS-1 / DSM 13023 / NCIMB 13966).